Consider the following 426-residue polypeptide: UPF0329 protein ECU06_0040 (426 aa).

The segment covering 136-172 has biased composition (basic and acidic residues); the sequence is RQRKREEETERSVKELVGDEEKAKSKEEKAKSKEEKA. Residues 136–230 are disordered; sequence RQRKREEETE…GGKKKSKGGR (95 aa). The span at 220 to 230 shows a compositional bias: basic residues; that stretch reads KGGKKKSKGGR.

The protein belongs to the UPF0329 family.

This is UPF0329 protein ECU06_0040 from Encephalitozoon cuniculi (strain GB-M1) (Microsporidian parasite).